Consider the following 635-residue polypeptide: Ankyrin repeat and SOCS box protein 2 (635 aa).

Residues 8-16 (RGSQCTIGQ) form a required for FLNA degradation region. Residues 26–45 (SEDELVQMAIEQSLADKTRG) enclose the UIM domain. 12 ANK repeats span residues 104–133 (APAD…NLAE), 137–167 (EGWL…TIDQ), 171–200 (QEET…EPDI), 204–233 (SRET…DTNH), 237–266 (RGWT…KVES), 270–299 (YGIT…DINT), 303–332 (DNAS…DANK), 336–365 (DGLL…RTRI), 368–397 (SGVS…DVNT), 410–439 (RRSS…DPNR), 440–469 (DVIS…NIDA), and 476–504 (TAFP…DGEP). Position 371 is a phosphoserine; by MAPK (serine 371). The 50-residue stretch at 586–635 (IKEKAEPPRPLAHLCRLRVRKAIGKYRIKLLDTLPLPGRLIRYLKYENTQ) folds into the SOCS box domain.

It belongs to the ankyrin SOCS box (ASB) family. As to quaternary structure, component of a probable ECS E3 ubiquitin-protein ligase complex which contains CUL5, either RBX1 or RNF7/RBX2, Elongin BC complex (ELOB and ELOC) and ASB2. Interacts with SKP2. Through its interaction with SKP2, likely to bridge the formation of dimeric E3-ubiquitin-protein ligase complexes composed of an ECS complex and an SCF(SKP2) complex. Interacts with JAK2; the interaction targets JAK2 for Notch-mediated proteasomal degradation. Interacts with TCF3/E2A; the interaction is mediated by SKP2 and targets TCF3 for Notch-mediated proteasomal degradation. Interacts with DES. In terms of processing, monoubiquitinated. Not monoubiquitinated. Post-translationally, phosphorylation at Ser-371 is required for association with FLNA and subsequent FLNA degradation. Expressed in muscle cells. In terms of tissue distribution, expressed in hematopoietic cells.

The protein resides in the cytoplasm. Its subcellular location is the cytoskeleton. The protein localises to the stress fiber. It localises to the myofibril. It is found in the sarcomere. The protein resides in the z line. The protein operates within protein modification; protein ubiquitination. Its function is as follows. Substrate-recognition component of a SCF-like ECS (Elongin-Cullin-SOCS-box protein) E3 ubiquitin-protein ligase complex which mediates the ubiquitination and subsequent proteasomal degradation of target proteins. Mediates Notch-induced ubiquitination and degradation of substrates including TCF3/E2A and JAK2. Required during embryonic heart development for complete heart looping. Required for cardiomyocyte differentiation. Specifically promotes the ubiquitination of SMAD9 and targets it for proteasomal degradation, leading to avoid excessive accumulation of SMAD9. Plays a role in the regulation of NK-cell migration by modulating protein levels of filamin A/FLNA via regulation of its ubiquitination and proteasome degradation. Functionally, involved in myogenic differentiation and targets filamin FLNB for proteasomal degradation but not filamin FLNA. Also targets DES for proteasomal degradation. Acts as a negative regulator of skeletal muscle mass. In terms of biological role, targets filamins FLNA and FLNB for proteasomal degradation. This leads to enhanced adhesion of hematopoietic cells to fibronectin. Required for FLNA degradation in immature cardiomyocytes which is necessary for actin cytoskeleton remodeling, leading to proper organization of myofibrils and function of mature cardiomyocytes. Required for degradation of FLNA and FLNB in immature dendritic cells (DC) which enhances immature DC migration by promoting DC podosome formation and DC-mediated degradation of the extracellular matrix. Does not promote proteasomal degradation of tyrosine-protein kinases JAK1 or JAK2 in hematopoietic cells. This is Ankyrin repeat and SOCS box protein 2 (ASB2) from Homo sapiens (Human).